Consider the following 300-residue polypeptide: Lysenin-related protein 3 (300 aa).

Positions 12–35 (EEIEVDVVAVWKEGYVYENRGDTS) are N-terminal cap domain. Positions 36–109 (VEQKITMTKG…SQVIEHTVTI (74 aa)) are beta-hairpin domain. The tract at residues 110 to 158 (PPTSKFTRWKLNADVGGTDIEYMYLIDEVTPISVTQTIPQVIRSRAKIL) is N-terminal cap domain. The tract at residues 159–299 (VGRQIHLGTT…EDKWILEVVN (141 aa)) is C-terminal receptor-binding domain. Residues K187, S229, Y235, and Y284 each coordinate an N-(acyl)-sphingosylphosphocholine. A disulfide bridge links C274 with C285.

This sequence belongs to the lysenin family. As to quaternary structure, binds to sphingomyelin as a monomer by using its C-terminal domain. Forms a nonamer when sphingomyelin/LRP-3 ratio is lower than ca 500. Oligomerization, but not binding, is influenced by the fluidity of sphingomyelin. In terms of tissue distribution, expressed by coelomocytes.

It is found in the secreted. The protein localises to the target cell membrane. Its function is as follows. Pore-forming toxin that specifically binds sphingomyelin in the plasma membrane of various cells. Has antibacterial and hemolytic activity. This is Lysenin-related protein 3 from Eisenia fetida (Red wiggler worm).